Reading from the N-terminus, the 250-residue chain is Small ribosomal subunit protein uS2 (250 aa).

Positions 226–250 are disordered; it reads DQQNRQELGEDLGAAVEPAAEEALA. Residues 239 to 250 are compositionally biased toward low complexity; it reads AAVEPAAEEALA.

This sequence belongs to the universal ribosomal protein uS2 family.

In Zymomonas mobilis subsp. mobilis (strain ATCC 31821 / ZM4 / CP4), this protein is Small ribosomal subunit protein uS2 (rpsB).